A 172-amino-acid chain; its full sequence is Putative metal-dependent hydrolase OB0782 (172 aa).

The Zn(2+) site is built by His64, His155, and His159.

Belongs to the metal hydrolase YfiT family. In terms of assembly, homodimer. Zn(2+) is required as a cofactor.

It localises to the cytoplasm. Possible metal-dependent hydrolase. This Oceanobacillus iheyensis (strain DSM 14371 / CIP 107618 / JCM 11309 / KCTC 3954 / HTE831) protein is Putative metal-dependent hydrolase OB0782.